Reading from the N-terminus, the 512-residue chain is Ribose import ATP-binding protein RbsA 2 (512 aa).

ABC transporter domains lie at 7-242 (LEIR…VGRE) and 257-498 (LGEP…SGIG). Position 39–46 (39–46 (GENGAGKS)) interacts with ATP.

Belongs to the ABC transporter superfamily. Ribose importer (TC 3.A.1.2.1) family. The complex is composed of an ATP-binding protein (RbsA), two transmembrane proteins (RbsC) and a solute-binding protein (RbsB).

It localises to the cell inner membrane. The enzyme catalyses D-ribose(out) + ATP + H2O = D-ribose(in) + ADP + phosphate + H(+). Its function is as follows. Part of the ABC transporter complex RbsABC involved in ribose import. Responsible for energy coupling to the transport system. This chain is Ribose import ATP-binding protein RbsA 2, found in Rhizobium meliloti (strain 1021) (Ensifer meliloti).